A 351-amino-acid chain; its full sequence is Photosystem II D2 protein (351 aa).

Residues T39–T59 form a helical membrane-spanning segment. H116 is a binding site for chlorophyll a. Residues G123–P139 form a helical membrane-spanning segment. Pheophytin a is bound by residues Q128 and N141. A helical membrane pass occupies residues V151–A164. H196 is a chlorophyll a binding site. A helical transmembrane segment spans residues G206–D226. 2 residues coordinate a plastoquinone: H213 and F260. Position 213 (H213) interacts with Fe cation. Residue H267 participates in Fe cation binding. A helical transmembrane segment spans residues G277–R293.

It belongs to the reaction center PufL/M/PsbA/D family. As to quaternary structure, PSII is composed of 1 copy each of membrane proteins PsbA, PsbB, PsbC, PsbD, PsbE, PsbF, PsbH, PsbI, PsbJ, PsbK, PsbL, PsbM, PsbT, PsbX, PsbY, PsbZ, Psb30/Ycf12, at least 3 peripheral proteins of the oxygen-evolving complex and a large number of cofactors. It forms dimeric complexes. Requires The D1/D2 heterodimer binds P680, chlorophylls that are the primary electron donor of PSII, and subsequent electron acceptors. It shares a non-heme iron and each subunit binds pheophytin, quinone, additional chlorophylls, carotenoids and lipids. There is also a Cl(-1) ion associated with D1 and D2, which is required for oxygen evolution. The PSII complex binds additional chlorophylls, carotenoids and specific lipids. as cofactor.

Its subcellular location is the plastid. The protein localises to the chloroplast thylakoid membrane. It carries out the reaction 2 a plastoquinone + 4 hnu + 2 H2O = 2 a plastoquinol + O2. Its function is as follows. Photosystem II (PSII) is a light-driven water:plastoquinone oxidoreductase that uses light energy to abstract electrons from H(2)O, generating O(2) and a proton gradient subsequently used for ATP formation. It consists of a core antenna complex that captures photons, and an electron transfer chain that converts photonic excitation into a charge separation. The D1/D2 (PsbA/PsbD) reaction center heterodimer binds P680, the primary electron donor of PSII as well as several subsequent electron acceptors. D2 is needed for assembly of a stable PSII complex. The polypeptide is Photosystem II D2 protein (Trieres chinensis (Marine centric diatom)).